The primary structure comprises 138 residues: Protein PsiE homolog (138 aa).

4 consecutive transmembrane segments (helical) span residues 14–34, 56–76, 84–104, and 109–129; these read LQALLNVCLFFLAIALSGLLI, YEMLGELLIFFMYFEFIALII, HFPLRYFIYIGITAVIRLIII, and AISTFWWAMAILAMICAFFIV.

This sequence belongs to the PsiE family.

The protein localises to the cell membrane. The sequence is that of Protein PsiE homolog from Bacillus velezensis (strain DSM 23117 / BGSC 10A6 / LMG 26770 / FZB42) (Bacillus amyloliquefaciens subsp. plantarum).